Here is a 330-residue protein sequence, read N- to C-terminus: Phosphate acyltransferase (330 aa).

Belongs to the PlsX family. In terms of assembly, homodimer. Probably interacts with PlsY.

It is found in the cytoplasm. It catalyses the reaction a fatty acyl-[ACP] + phosphate = an acyl phosphate + holo-[ACP]. It participates in lipid metabolism; phospholipid metabolism. Catalyzes the reversible formation of acyl-phosphate (acyl-PO(4)) from acyl-[acyl-carrier-protein] (acyl-ACP). This enzyme utilizes acyl-ACP as fatty acyl donor, but not acyl-CoA. The polypeptide is Phosphate acyltransferase (Lactobacillus delbrueckii subsp. bulgaricus (strain ATCC BAA-365 / Lb-18)).